Reading from the N-terminus, the 97-residue chain is Co-chaperonin GroES (97 aa).

It belongs to the GroES chaperonin family. As to quaternary structure, heptamer of 7 subunits arranged in a ring. Interacts with the chaperonin GroEL.

Its subcellular location is the cytoplasm. Its function is as follows. Together with the chaperonin GroEL, plays an essential role in assisting protein folding. The GroEL-GroES system forms a nano-cage that allows encapsulation of the non-native substrate proteins and provides a physical environment optimized to promote and accelerate protein folding. GroES binds to the apical surface of the GroEL ring, thereby capping the opening of the GroEL channel. In Klebsiella aerogenes (Enterobacter aerogenes), this protein is Co-chaperonin GroES.